The following is a 557-amino-acid chain: Iron-sulfur cluster assembly SufBD family protein ABCI8, chloroplastic (557 aa).

The tract at residues 1 to 47 (MASLLANGISSFSPQPTSDSSKSPKGFHPKPESLKFPSPKSLNPTRP) is disordered. A chloroplast-targeting transit peptide spans 1 to 52 (MASLLANGISSFSPQPTSDSSKSPKGFHPKPESLKFPSPKSLNPTRPIFKLR). A compositionally biased stretch (low complexity) spans 10–24 (SSFSPQPTSDSSKSP).

Belongs to the iron-sulfur cluster assembly SufBD family.

Its subcellular location is the plastid. The protein localises to the chloroplast. Functionally, involved in light signaling, probably by mediating the transport and correct distribution of protoporphyrin IX, a chlorophyll precursor, in response to far-red light. This Arabidopsis thaliana (Mouse-ear cress) protein is Iron-sulfur cluster assembly SufBD family protein ABCI8, chloroplastic (ABCI8).